The primary structure comprises 29 residues: Cyclotide vibi-A (29 aa).

Residues 1–29 (GLPVCGETCFGGTCNTPGCSCSYPICTRN) constitute a cross-link (cyclopeptide (Gly-Asn)). 3 disulfide bridges follow: Cys5–Cys19, Cys9–Cys21, and Cys14–Cys26.

Post-translationally, this is a cyclic peptide.

Functionally, probably participates in a plant defense mechanism. This is Cyclotide vibi-A from Viola biflora (Yellow wood violet).